A 195-amino-acid polypeptide reads, in one-letter code: Neurensin-1 (195 aa).

Helical transmembrane passes span 66–86 (LISG…GFLV) and 120–140 (AVLF…SVFV).

The protein belongs to the VMP family. As to expression, expressed in brain. Not detectable in other tissues tested.

It is found in the membrane. Its subcellular location is the cell projection. It localises to the neuron projection. Functionally, may play an important role in neural organelle transport, and in transduction of nerve signals or in nerve growth. May play a role in neurite extension. May play a role in memory consolidation. The chain is Neurensin-1 from Homo sapiens (Human).